The chain runs to 146 residues: Prefoldin subunit alpha 1 (146 aa).

Belongs to the prefoldin subunit alpha family. Heterohexamer of two alpha and four beta subunits.

The protein resides in the cytoplasm. Molecular chaperone capable of stabilizing a range of proteins. Seems to fulfill an ATP-independent, HSP70-like function in archaeal de novo protein folding. In Thermococcus kodakarensis (strain ATCC BAA-918 / JCM 12380 / KOD1) (Pyrococcus kodakaraensis (strain KOD1)), this protein is Prefoldin subunit alpha 1.